Reading from the N-terminus, the 183-residue chain is Ribosome rescue factor SmrB (183 aa).

A Smr domain is found at L98–E173.

This sequence belongs to the SmrB family. Associates with collided ribosomes, but not with correctly translating polysomes.

Its function is as follows. Acts as a ribosome collision sensor. Detects stalled/collided disomes (pairs of ribosomes where the leading ribosome is stalled and a second ribosome has collided with it) and endonucleolytically cleaves mRNA at the 5' boundary of the stalled ribosome. Stalled/collided disomes form a new interface (primarily via the 30S subunits) that binds SmrB. Cleaved mRNA becomes available for tmRNA ligation, leading to ribosomal subunit dissociation and rescue of stalled ribosomes. In Escherichia coli O17:K52:H18 (strain UMN026 / ExPEC), this protein is Ribosome rescue factor SmrB.